Consider the following 296-residue polypeptide: Glycine--tRNA ligase alpha subunit (296 aa).

The protein belongs to the class-II aminoacyl-tRNA synthetase family. As to quaternary structure, tetramer of two alpha and two beta subunits.

It is found in the cytoplasm. The catalysed reaction is tRNA(Gly) + glycine + ATP = glycyl-tRNA(Gly) + AMP + diphosphate. This Listeria monocytogenes serotype 4b (strain CLIP80459) protein is Glycine--tRNA ligase alpha subunit.